A 146-amino-acid chain; its full sequence is Hemoglobin subunit beta (146 aa).

Residue Val1 is modified to N-acetylvaline. Residues 2–146 (HLTGEEKAAV…VANALAHKYH (145 aa)) form the Globin domain. A Phosphothreonine modification is found at Thr12. The residue at position 44 (Ser44) is a Phosphoserine. Lys59 is subject to N6-acetyllysine. His63 is a heme b binding site. An N6-acetyllysine modification is found at Lys82. His92 is a heme b binding site. The residue at position 93 (Cys93) is an S-nitrosocysteine. Lys144 is modified (N6-acetyllysine).

The protein belongs to the globin family. Heterotetramer of two alpha chains and two beta chains. As to expression, red blood cells.

Involved in oxygen transport from the lung to the various peripheral tissues. In Ailurus fulgens (Himalayan red panda), this protein is Hemoglobin subunit beta (HBB).